We begin with the raw amino-acid sequence, 422 residues long: UDP-N-acetylmuramoylalanine--D-glutamate ligase (422 aa).

Residue glycine 102–threonine 108 coordinates ATP.

Belongs to the MurCDEF family.

It is found in the cytoplasm. It carries out the reaction UDP-N-acetyl-alpha-D-muramoyl-L-alanine + D-glutamate + ATP = UDP-N-acetyl-alpha-D-muramoyl-L-alanyl-D-glutamate + ADP + phosphate + H(+). It participates in cell wall biogenesis; peptidoglycan biosynthesis. Its function is as follows. Cell wall formation. Catalyzes the addition of glutamate to the nucleotide precursor UDP-N-acetylmuramoyl-L-alanine (UMA). The polypeptide is UDP-N-acetylmuramoylalanine--D-glutamate ligase (Helicobacter pylori (strain J99 / ATCC 700824) (Campylobacter pylori J99)).